Here is a 704-residue protein sequence, read N- to C-terminus: Elongation factor G 1 (704 aa).

The tr-type G domain occupies 8–290; that stretch reads ERYRNIGICA…CVVEYMPAPT (283 aa). GTP-binding positions include 17 to 24, 88 to 92, and 142 to 145; these read AHVDAGKT, DTPGH, and NKMD.

The protein belongs to the TRAFAC class translation factor GTPase superfamily. Classic translation factor GTPase family. EF-G/EF-2 subfamily.

Its subcellular location is the cytoplasm. Its function is as follows. Catalyzes the GTP-dependent ribosomal translocation step during translation elongation. During this step, the ribosome changes from the pre-translocational (PRE) to the post-translocational (POST) state as the newly formed A-site-bound peptidyl-tRNA and P-site-bound deacylated tRNA move to the P and E sites, respectively. Catalyzes the coordinated movement of the two tRNA molecules, the mRNA and conformational changes in the ribosome. The polypeptide is Elongation factor G 1 (Pseudoalteromonas translucida (strain TAC 125)).